Consider the following 355-residue polypeptide: 3-isopropylmalate dehydrogenase (355 aa).

An NAD(+)-binding site is contributed by Gly-77–Glu-90. Residues Arg-97, Arg-107, Arg-135, and Asp-220 each coordinate substrate. The Mg(2+) site is built by Asp-220, Asp-244, and Asp-248. Residue Gly-277 to Asn-289 coordinates NAD(+).

Belongs to the isocitrate and isopropylmalate dehydrogenases family. LeuB type 1 subfamily. Homodimer. Mg(2+) is required as a cofactor. Mn(2+) serves as cofactor.

Its subcellular location is the cytoplasm. It carries out the reaction (2R,3S)-3-isopropylmalate + NAD(+) = 4-methyl-2-oxopentanoate + CO2 + NADH. Its pathway is amino-acid biosynthesis; L-leucine biosynthesis; L-leucine from 3-methyl-2-oxobutanoate: step 3/4. Catalyzes the oxidation of 3-carboxy-2-hydroxy-4-methylpentanoate (3-isopropylmalate) to 3-carboxy-4-methyl-2-oxopentanoate. The product decarboxylates to 4-methyl-2 oxopentanoate. The chain is 3-isopropylmalate dehydrogenase from Sulfurimonas denitrificans (strain ATCC 33889 / DSM 1251) (Thiomicrospira denitrificans (strain ATCC 33889 / DSM 1251)).